The chain runs to 876 residues: Ergothioneine biosynthesis protein 1 (876 aa).

Residues 36-350 (IIDIRRVAVE…TYGNEYGLHL (315 aa)) are L-histidine N(alpha)-methyltransferase. An L-histidine-binding site is contributed by Tyr-88. Gly-119, Lys-125, and Asp-146 together coordinate S-adenosyl-L-methionine. L-histidine is bound by residues Asn-202, Tyr-242, and 315–317 (EQS). Positions 378 to 874 (ALWATWDVVT…YAWVGARVVR (497 aa)) are hercynylcysteine S-oxide synthase. Residues His-413, His-506, and His-510 each coordinate Fe cation. Disordered regions lie at residues 631–650 (GTTN…QQLP) and 732–761 (TNNG…SNTT). Low complexity predominate over residues 744 to 758 (PSSETPAESSSPSDS).

This sequence in the N-terminal section; belongs to the methyltransferase superfamily. EgtD family. In the C-terminal section; belongs to the EgtB family. The cofactor is Fe(2+).

It localises to the cytoplasm. The protein localises to the nucleus. It carries out the reaction L-histidine + 3 S-adenosyl-L-methionine = hercynine + 3 S-adenosyl-L-homocysteine + 3 H(+). The catalysed reaction is hercynine + L-cysteine + O2 = S-(hercyn-2-yl)-L-cysteine S-oxide + H2O. It participates in amino-acid biosynthesis; ergothioneine biosynthesis. In terms of biological role, catalyzes the SAM-dependent triple methylation of the alpha-amino group of histidine to form hercynine and subsequent conjugation with cysteine and oxygen to form hercynylcysteine sulfoxide, the first two steps in the biosynthesis pathway of ergothioneine. Ergothioneine is an unusual thio-histidine betaine amino acid that acts as an antioxidant against peroxide in conidia and contributes to conidial longevity. The protein is Ergothioneine biosynthesis protein 1 of Neurospora crassa (strain ATCC 24698 / 74-OR23-1A / CBS 708.71 / DSM 1257 / FGSC 987).